The chain runs to 485 residues: MKRLRPSDKFFELLGYKPHHVQLAIHRSTAKRRVACLGRQSGKSEAASVEAVFELFARPGSQGWIIAPTYDQAEIIFGRVVEKVERLSEVFPTTEVQLQRRRLRLLVHHYDRPVNAPGAKRVATSEFRGKSADRPDNLRGATLDFVILDEAAMIPFSVWSEAIEPTLSVRDGWALIISTPKGLNWFYEFFLMGWRGGLKEGIPNSGINQTHPDFESFHAASWDVWPERREWYMERRLYIPDLEFRQEYGAEFVSHSNSVFSGLDMLILLPYERRGTRLVVEDYRPDHIYCIGADFGKNQDYSVFSVLDLDTGAIACLERMNGATWSDQVARLKALSEDYGHAYVVADTWGVGDAIAEELDAQGINYTPLPVKSSSVKEQLISNLALLMEKGQVAVPNDKTILDELRNFRYYRTASGNQVMRAYGRGHDDIVMSLALAYSQYEGKDGYKFELAEERPSKLKHEESVMSLVEDDFTDLELANRAFSA.

Residues Gln97 and Gln99 each coordinate ATP. The Walker A motif motif lies at 124 to 131 (TSEFRGKS). A Walker B motif motif is present at residues 145 to 150 (FVILDE). Glu150 functions as the For ATPase activity in the catalytic mechanism. Residues 256–438 (SNSVFSGLDM…DIVMSLALAY (183 aa)) are nuclease. Mg(2+) contacts are provided by Asp294, Asp347, and Asp429.

This sequence belongs to the Tequatrovirus large terminase family. As to quaternary structure, interacts with the terminase small subunit; the active complex is probably heterooligomeric. Interacts with the portal protein. Mg(2+) is required as a cofactor.

Functionally, the terminase large subunit acts as an ATP driven molecular motor necessary for viral DNA translocation into empty capsids and as an endonuclease that cuts the viral genome to initiate and to end a packaging reaction The terminase lies at a unique vertex of the procapsid and is composed of two subunits, a small terminase subunit involved in viral DNA recognition (packaging sequence), and a large terminase subunit possessing endonucleolytic and ATPase activities. Both terminase subunits heterooligomerize and are docked on the portal protein to form the packaging machine. The terminase large subunit exhibits endonuclease activity and cleaves the viral genome concatemer. Once the capsid is packaged with the DNA, the terminase complex is substituted by the tail. The sequence is that of Terminase, large subunit from Thermus thermophilus (Thermus thermophilus phage G20c).